Reading from the N-terminus, the 485-residue chain is ATP synthase subunit beta (485 aa).

170-177 contacts ATP; it reads GGAGVGKT.

Belongs to the ATPase alpha/beta chains family. F-type ATPases have 2 components, CF(1) - the catalytic core - and CF(0) - the membrane proton channel. CF(1) has five subunits: alpha(3), beta(3), gamma(1), delta(1), epsilon(1). CF(0) has three main subunits: a(1), b(2) and c(9-12). The alpha and beta chains form an alternating ring which encloses part of the gamma chain. CF(1) is attached to CF(0) by a central stalk formed by the gamma and epsilon chains, while a peripheral stalk is formed by the delta and b chains.

The protein resides in the cell membrane. It carries out the reaction ATP + H2O + 4 H(+)(in) = ADP + phosphate + 5 H(+)(out). Its function is as follows. Produces ATP from ADP in the presence of a proton gradient across the membrane. The catalytic sites are hosted primarily by the beta subunits. The sequence is that of ATP synthase subunit beta from Salinispora arenicola (strain CNS-205).